The following is a 296-amino-acid chain: NAD kinase (296 aa).

Aspartate 72 (proton acceptor) is an active-site residue. NAD(+) contacts are provided by residues 72–73, 146–147, arginine 157, lysine 174, aspartate 176, 187–192, and glutamine 247; these read DG, ND, and TAYALS.

This sequence belongs to the NAD kinase family. The cofactor is a divalent metal cation.

The protein resides in the cytoplasm. The enzyme catalyses NAD(+) + ATP = ADP + NADP(+) + H(+). Functionally, involved in the regulation of the intracellular balance of NAD and NADP, and is a key enzyme in the biosynthesis of NADP. Catalyzes specifically the phosphorylation on 2'-hydroxyl of the adenosine moiety of NAD to yield NADP. This is NAD kinase from Pseudomonas fluorescens (strain SBW25).